A 122-amino-acid polypeptide reads, in one-letter code: Large ribosomal subunit protein uL18 (122 aa).

This sequence belongs to the universal ribosomal protein uL18 family. In terms of assembly, part of the 50S ribosomal subunit; part of the 5S rRNA/L5/L18/L25 subcomplex. Contacts the 5S and 23S rRNAs.

This is one of the proteins that bind and probably mediate the attachment of the 5S RNA into the large ribosomal subunit, where it forms part of the central protuberance. This chain is Large ribosomal subunit protein uL18, found in Geobacter sp. (strain M21).